Here is a 584-residue protein sequence, read N- to C-terminus: NADPH-dependent diflavin oxidoreductase 1 (584 aa).

In terms of domain architecture, Flavodoxin-like spans 6–150; that stretch reads IYILYGSETG…VFAYWCNHLY (145 aa). Residues 12–17, 59–62, 97–106, and glutamate 132 contribute to the FMN site; these read SETGTA, STTG, and CGDTSYTRFN. Residues 199 to 436 enclose the FAD-binding FR-type domain; it reads RGKIEATLVH…LPGFLNLSYQ (238 aa). Residues arginine 343, 373 to 376, and 407 to 410 contribute to the FAD site; these read RQYS and GICS. NADP(+) is bound by residues threonine 448, 503–504, and 509–513; these read SR and KKYVQ. Residue tryptophan 584 participates in FAD binding.

Belongs to the NADPH-dependent diflavin oxidoreductase NDOR1 family. It in the N-terminal section; belongs to the flavodoxin family. The protein in the C-terminal section; belongs to the flavoprotein pyridine nucleotide cytochrome reductase family. Interacts with dre2; as part of the cytosolic iron-sulfur (Fe-S) protein assembly (CIA) machinery. FAD is required as a cofactor. FMN serves as cofactor.

It is found in the cytoplasm. The protein resides in the mitochondrion. It carries out the reaction 2 oxidized [2Fe-2S]-[protein] + NADPH = 2 reduced [2Fe-2S]-[protein] + NADP(+) + H(+). Functionally, NADPH-dependent reductase which is a central component of the cytosolic iron-sulfur (Fe-S) protein assembly (CIA) machinery. Transfers electrons from NADPH via its FAD and FMN prosthetic groups to the [2Fe-2S] cluster of dre2, another key component of the CIA machinery. In turn, this reduced cluster provides electrons for assembly of cytosolic iron-sulfur cluster proteins. Positively controls H(2)O(2)-induced cell death. This chain is NADPH-dependent diflavin oxidoreductase 1, found in Schizosaccharomyces pombe (strain 972 / ATCC 24843) (Fission yeast).